Here is a 304-residue protein sequence, read N- to C-terminus: Mas-related G-protein coupled receptor member A1 (304 aa).

Residues 1–17 (MDNTIPGGINITILIPN) are Extracellular-facing. Asparagine 10 carries an N-linked (GlcNAc...) asparagine glycan. A helical membrane pass occupies residues 18–38 (LMIIIFGLVGLTGNGIVFWLL). Over 39 to 53 (GFCLHRNAFSVYILN) the chain is Cytoplasmic. Residues 54–74 (LALADFFFLLGHIIDSILLLL) form a helical membrane-spanning segment. A topological domain (extracellular) is located at residue asparagine 75. Residues 76-96 (VFYPITFLLCFYTIMMVLYIA) traverse the membrane as a helical segment. Topologically, residues 97-131 (GLSMLSAISTERCLSVLCPIWYHCHRPEHTSTVMC) are cytoplasmic. Residues 132 to 152 (AVIWVLSLLICILNSYFCGFL) form a helical membrane-spanning segment. Residues 153 to 166 (NTQYKNENGCLALN) lie on the Extracellular side of the membrane. Residues 167-187 (FFTAAYLMFLFVVLCLSSLAL) form a helical membrane-spanning segment. The Cytoplasmic portion of the chain corresponds to 188 to 206 (VARLFCGTGQIKLTRLYVT). Residues 207–227 (IILSILVFLLCGLPFGIHWFL) form a helical membrane-spanning segment. At 228–243 (LFKIKDDFHVFDLGFY) the chain is on the extracellular side. The helical transmembrane segment at 244 to 264 (LASVVLTAINSCANPIIYFFV) threads the bilayer. The Cytoplasmic portion of the chain corresponds to 265–304 (GSFRHRLKHQTLKMVLQNALQDTPETAKIMVEMSRSKSEP).

This sequence belongs to the G-protein coupled receptor 1 family. Mas subfamily. As to expression, expressed in a subset of sensory neurons that includes nociceptors. Expressed in the subclass of non-peptidergic sensory neurons that are IB4(+) and VR1(-).

The protein localises to the cell membrane. Its function is as follows. Orphan receptor activated by a subset of RFamide-family neuropeptides such as FLRF-amide and FMRF-amide. Mediates its action by association with G proteins that activate a phosphatidylinositol-calcium second messenger system. Its effect is mediated by G(q) and G(11) proteins. May regulate the function of nociceptive neurons by modulation of pain perception. The sequence is that of Mas-related G-protein coupled receptor member A1 (Mrgpra1) from Mus musculus (Mouse).